The chain runs to 394 residues: Elongation factor Tu (394 aa).

In terms of domain architecture, tr-type G spans 10–204 (KPHVNVGTIG…ALDSYIPTPE (195 aa)). The segment at 19 to 26 (GHVDHGKT) is G1. 19 to 26 (GHVDHGKT) serves as a coordination point for GTP. Residue Thr-26 participates in Mg(2+) binding. The G2 stretch occupies residues 60-64 (GITIN). The tract at residues 81–84 (DCPG) is G3. GTP contacts are provided by residues 81-85 (DCPGH) and 136-139 (NKCD). The segment at 136 to 139 (NKCD) is G4. Positions 174–176 (SAL) are G5.

This sequence belongs to the TRAFAC class translation factor GTPase superfamily. Classic translation factor GTPase family. EF-Tu/EF-1A subfamily. In terms of assembly, monomer.

The protein localises to the cytoplasm. The enzyme catalyses GTP + H2O = GDP + phosphate + H(+). GTP hydrolase that promotes the GTP-dependent binding of aminoacyl-tRNA to the A-site of ribosomes during protein biosynthesis. This is Elongation factor Tu from Neisseria meningitidis serogroup A / serotype 4A (strain DSM 15465 / Z2491).